The sequence spans 218 residues: Putative glutamine transport system permease protein GlnP (218 aa).

Residues 19–208 enclose the ABC transmembrane type-1 domain; that stretch reads TLITLKYSVI…ILVMLISFIA (190 aa). A run of 4 helical transmembrane segments spans residues 25–45, 57–79, 86–108, and 187–207; these read YSVIAVIFGLVIGVLLALCKV, FYTSIFRGTPLLIQLSIIYFASP, FTVFMAGAISFSLNSGAYVSEVI, and FFPMIVAACCYYILVMLISFI.

Belongs to the binding-protein-dependent transport system permease family. HisMQ subfamily.

It localises to the cell inner membrane. In terms of biological role, part of the binding-protein-dependent transport system for glutamine; probably responsible for the translocation of the substrate across the membrane. The protein is Putative glutamine transport system permease protein GlnP (glnP) of Rickettsia bellii (strain RML369-C).